We begin with the raw amino-acid sequence, 38 residues long: Photosystem II reaction center protein L (38 aa).

The chain crosses the membrane as a helical span at residues 17–37; that stretch reads SLYWGLLLIFVLAVLFSNYFF.

The protein belongs to the PsbL family. As to quaternary structure, PSII is composed of 1 copy each of membrane proteins PsbA, PsbB, PsbC, PsbD, PsbE, PsbF, PsbH, PsbI, PsbJ, PsbK, PsbL, PsbM, PsbT, PsbX, PsbY, PsbZ, Psb30/Ycf12, at least 3 peripheral proteins of the oxygen-evolving complex and a large number of cofactors. It forms dimeric complexes.

The protein resides in the plastid. The protein localises to the chloroplast thylakoid membrane. Functionally, one of the components of the core complex of photosystem II (PSII). PSII is a light-driven water:plastoquinone oxidoreductase that uses light energy to abstract electrons from H(2)O, generating O(2) and a proton gradient subsequently used for ATP formation. It consists of a core antenna complex that captures photons, and an electron transfer chain that converts photonic excitation into a charge separation. This subunit is found at the monomer-monomer interface and is required for correct PSII assembly and/or dimerization. The polypeptide is Photosystem II reaction center protein L (Ananas comosus (Pineapple)).